The primary structure comprises 188 residues: Peptidyl-tRNA hydrolase (188 aa).

Tyr15 serves as a coordination point for tRNA. His20 functions as the Proton acceptor in the catalytic mechanism. TRNA contacts are provided by Phe66, Asn68, and Asn114.

Belongs to the PTH family. As to quaternary structure, monomer.

Its subcellular location is the cytoplasm. The enzyme catalyses an N-acyl-L-alpha-aminoacyl-tRNA + H2O = an N-acyl-L-amino acid + a tRNA + H(+). Hydrolyzes ribosome-free peptidyl-tRNAs (with 1 or more amino acids incorporated), which drop off the ribosome during protein synthesis, or as a result of ribosome stalling. In terms of biological role, catalyzes the release of premature peptidyl moieties from peptidyl-tRNA molecules trapped in stalled 50S ribosomal subunits, and thus maintains levels of free tRNAs and 50S ribosomes. The chain is Peptidyl-tRNA hydrolase from Lactococcus lactis subsp. lactis (strain IL1403) (Streptococcus lactis).